A 408-amino-acid polypeptide reads, in one-letter code: 2,3-bisphosphoglycerate-independent phosphoglycerate mutase 1 (408 aa).

This sequence belongs to the BPG-independent phosphoglycerate mutase family. A-PGAM subfamily. Monomer. Mn(2+) is required as a cofactor.

The catalysed reaction is (2R)-2-phosphoglycerate = (2R)-3-phosphoglycerate. The protein operates within carbohydrate degradation; glycolysis; pyruvate from D-glyceraldehyde 3-phosphate: step 3/5. In terms of biological role, catalyzes the interconversion of 2-phosphoglycerate and 3-phosphoglycerate. The chain is 2,3-bisphosphoglycerate-independent phosphoglycerate mutase 1 (apgM1) from Archaeoglobus fulgidus (strain ATCC 49558 / DSM 4304 / JCM 9628 / NBRC 100126 / VC-16).